Here is a 299-residue protein sequence, read N- to C-terminus: ATP phosphoribosyltransferase (299 aa).

Belongs to the ATP phosphoribosyltransferase family. Long subfamily. In terms of assembly, equilibrium between an active dimeric form, an inactive hexameric form and higher aggregates. Interconversion between the various forms is largely reversible and is influenced by the natural substrates and inhibitors of the enzyme. Mg(2+) serves as cofactor.

The protein resides in the cytoplasm. The enzyme catalyses 1-(5-phospho-beta-D-ribosyl)-ATP + diphosphate = 5-phospho-alpha-D-ribose 1-diphosphate + ATP. It participates in amino-acid biosynthesis; L-histidine biosynthesis; L-histidine from 5-phospho-alpha-D-ribose 1-diphosphate: step 1/9. Its activity is regulated as follows. Feedback inhibited by histidine. Its function is as follows. Catalyzes the condensation of ATP and 5-phosphoribose 1-diphosphate to form N'-(5'-phosphoribosyl)-ATP (PR-ATP). Has a crucial role in the pathway because the rate of histidine biosynthesis seems to be controlled primarily by regulation of HisG enzymatic activity. The sequence is that of ATP phosphoribosyltransferase from Blochmanniella pennsylvanica (strain BPEN).